The sequence spans 132 residues: Arsenate reductase 1 (132 aa).

Catalysis depends on nucleophile residues cysteine 10, cysteine 82, and cysteine 89. 2 disulfide bridges follow: cysteine 10-cysteine 82 and cysteine 82-cysteine 89.

Belongs to the low molecular weight phosphotyrosine protein phosphatase family. Thioredoxin-coupled ArsC subfamily.

The protein localises to the cytoplasm. The enzyme catalyses arsenate + [thioredoxin]-dithiol + H(+) = arsenite + [thioredoxin]-disulfide + H2O. Its function is as follows. Catalyzes the reduction of arsenate [As(V)] to arsenite [As(III)]. This Staphylococcus epidermidis (strain ATCC 35984 / DSM 28319 / BCRC 17069 / CCUG 31568 / BM 3577 / RP62A) protein is Arsenate reductase 1.